The sequence spans 441 residues: Protein translocase subunit SecY (441 aa).

The next 10 helical transmembrane spans lie at 25 to 45 (YFVI…IPGI), 78 to 98 (IFAL…ILTL), 126 to 146 (LILA…IPGL), 155 to 175 (ISFY…LMWL), 184 to 204 (IGNG…PSSF), 218 to 238 (VLLF…VVYI), 275 to 295 (VIPA…ASWF), 318 to 338 (YILT…GLAF), 376 to 396 (FLGS…RFFM), and 398 to 418 (VPFY…IDFI).

Belongs to the SecY/SEC61-alpha family. Component of the Sec protein translocase complex. Heterotrimer consisting of SecY, SecE and SecG subunits. The heterotrimers can form oligomers, although 1 heterotrimer is thought to be able to translocate proteins. Interacts with the ribosome. Interacts with SecDF, and other proteins may be involved. Interacts with SecA.

The protein resides in the cell membrane. In terms of biological role, the central subunit of the protein translocation channel SecYEG. Consists of two halves formed by TMs 1-5 and 6-10. These two domains form a lateral gate at the front which open onto the bilayer between TMs 2 and 7, and are clamped together by SecE at the back. The channel is closed by both a pore ring composed of hydrophobic SecY resides and a short helix (helix 2A) on the extracellular side of the membrane which forms a plug. The plug probably moves laterally to allow the channel to open. The ring and the pore may move independently. The chain is Protein translocase subunit SecY from Buchnera aphidicola subsp. Baizongia pistaciae (strain Bp).